We begin with the raw amino-acid sequence, 456 residues long: Glycerol-3-phosphate acyltransferase 4 (456 aa).

Positions 1–37 (MFLLLPFDSLIVSLLGISLTVLFTLLLVFIIVPAVFG) are cleaved as a signal peptide. Transmembrane regions (helical) follow at residues 156–176 (ISLRLTVLWGLGVLIRYCLLL) and 180–200 (IALAFTGISLLVVGTTMVGYL). The N-linked (GlcNAc...) asparagine glycan is linked to N247. Residues 248–253 (HTSPID) carry the HXXXXD motif motif. N327, N328, and N362 each carry an N-linked (GlcNAc...) asparagine glycan.

Belongs to the 1-acyl-sn-glycerol-3-phosphate acyltransferase family.

It localises to the endoplasmic reticulum membrane. It carries out the reaction sn-glycerol 3-phosphate + an acyl-CoA = a 1-acyl-sn-glycero-3-phosphate + CoA. It catalyses the reaction dodecanoyl-CoA + sn-glycerol 3-phosphate = 1-dodecanoyl-sn-glycerol 3-phosphate + CoA. The enzyme catalyses sn-glycerol 3-phosphate + hexadecanoyl-CoA = 1-hexadecanoyl-sn-glycero-3-phosphate + CoA. The catalysed reaction is sn-glycerol 3-phosphate + octadecanoyl-CoA = 1-octadecanoyl-sn-glycero-3-phosphate + CoA. It carries out the reaction sn-glycerol 3-phosphate + (9Z)-octadecenoyl-CoA = 1-(9Z-octadecenoyl)-sn-glycero-3-phosphate + CoA. It catalyses the reaction (9Z,12Z)-octadecadienoyl-CoA + sn-glycerol 3-phosphate = 1-(9Z,12Z)-octadecadienoyl-sn-glycero-3-phosphate + CoA. Its pathway is phospholipid metabolism; CDP-diacylglycerol biosynthesis; CDP-diacylglycerol from sn-glycerol 3-phosphate: step 1/3. Its function is as follows. Converts glycerol-3-phosphate to 1-acyl-sn-glycerol-3-phosphate (lysophosphatidic acid or LPA) by incorporating an acyl moiety at the sn-1 position of the glycerol backbone. Active against both saturated and unsaturated long-chain fatty acyl-CoAs. Protects cells against lipotoxicity. The sequence is that of Glycerol-3-phosphate acyltransferase 4 from Bos taurus (Bovine).